The primary structure comprises 478 residues: JmjC domain-containing histone demethylation protein 1 (478 aa).

The PHD-type zinc-finger motif lies at 5–68; the sequence is SESCPLCKVH…IYHCPECVPK (64 aa). The 167-residue stretch at 217-383 folds into the JmjC domain; that stretch reads SDVAKLGVDF…MQLKINEIER (167 aa). Residue T266 coordinates substrate. Residues H269 and D271 each contribute to the Fe cation site. K286 serves as a coordination point for substrate. H351 provides a ligand contact to Fe cation.

This sequence belongs to the JHDM1 histone demethylase family. Fe(2+) is required as a cofactor.

It localises to the nucleus. The enzyme catalyses N(6),N(6)-dimethyl-L-lysyl(36)-[histone H3] + 2 2-oxoglutarate + 2 O2 = L-lysyl(36)-[histone H3] + 2 formaldehyde + 2 succinate + 2 CO2. Its function is as follows. Histone demethylase that specifically demethylates 'Lys-36' of histone H3, thereby playing a central role in histone code. This Candida albicans (strain SC5314 / ATCC MYA-2876) (Yeast) protein is JmjC domain-containing histone demethylation protein 1 (JHD1).